The sequence spans 552 residues: MPSARLQQQFIRLWQCCEGKSQDTTLNELAALLSCSRRHMRTLLNTMQDRGWLTWEAEVGRGKRSRLIFLYTGLALQQQRAEDLLEQDRIDQLVQLVGDKATVRQMLVSHLGRSFRQGRHILRVLYYRPLRNLLPGSALRRSETHIARQIFSSLTRINEANGELEADIAHHWQQISPLHWRFFLRPGVHFHHGRELEMDDVIASFKRINTLPLYSHIADIVSPTPWTLDIHLTQPDRWLPLLLGQVPAMILPREWETLSNFASHPIGTGPYAVIRNSTNQLKIQAFDDFFGYRALIDEVNVWVLPEIADEPAGGLMLKGPQGEEKEIESRLEEGCYYLLFDSRTHRGANQQVRDWVSYVLSPTNLVYFAEEQYQQLWFPAYGLLPRWHHARTIKSEKPAGLESLTLTFYQDHSEHRVIAGIMQQILASHQVTLEIKEISYDQWHEGEIESDIWLNSANFTLPLDFSLFAHLCEVPLLQHCIPIDWQADAARWRNGEMNLANWCQQLVASKAMVPLIHHWLIIQGQRSMRGLRMNTLGWFDFKSAWFAPPDPE.

Positions 1–116 constitute an HTH marR-type domain; sequence MPSARLQQQF…LVSHLGRSFR (116 aa). The H-T-H motif DNA-binding region spans 26–49; the sequence is LNELAALLSCSRRHMRTLLNTMQD. The solute-binding stretch occupies residues 163-492; sequence ELEADIAHHW…IDWQADAARW (330 aa).

Functionally, activates the small RNA gene sgrS under glucose-phosphate stress conditions as well as yfdZ. Represses its own transcription under both stress and non-stress conditions. Might act as a sensor of the intracellular accumulation of phosphoglucose by binding these molecules in its C-terminal solute-binding domain. This chain is HTH-type transcriptional regulator SgrR, found in Shigella dysenteriae serotype 1 (strain Sd197).